The primary structure comprises 657 residues: Interferon-induced GTP-binding protein Mx1 (657 aa).

Residue M1 is modified to N-acetylmethionine. Residues 63–336 form the Dynamin-type G domain; the sequence is DLALPAIAVI…LITHICKTLP (274 aa). The segment at 73-80 is G1 motif; the sequence is GDQSSGKS. 73 to 80 provides a ligand contact to GTP; it reads GDQSSGKS. Residues 98 to 100 form a G2 motif region; sequence VTR. Positions 174 to 177 are G3 motif; that stretch reads DLPG. GTP contacts are provided by residues 174 to 178 and 243 to 246; these read DLPGI and TKPD. Positions 243-246 are G4 motif; it reads TKPD. Positions 275-278 are G5 motif; the sequence is KCRG. The interval 337–362 is bundle signaling element (BSE); that stretch reads LLENQIKENHEKITEELQKYGSDVPE. Positions 362 to 529 are middle domain; the sequence is EDEHEKMFFL…HFQMEQIVYC (168 aa). Residues 363–627 form a stalk region; sequence DEHEKMFFLI…KDTYSWLLKE (265 aa). The span at 540 to 551 shows a compositional bias: basic and acidic residues; it reads RVREKDSDEEKK. A disordered region spans residues 540–559; that stretch reads RVREKDSDEEKKKKTSSMSH. Positions 550–553 are critical for lipid-binding; sequence KKKK. The 89-residue stretch at 569–657 folds into the GED domain; it reads LSEILEHLLA…ARRRLAKFPG (89 aa).

Belongs to the TRAFAC class dynamin-like GTPase superfamily. Dynamin/Fzo/YdjA family. As to quaternary structure, homooligomer. Oligomerizes into multimeric filamentous or ring-like structures by virtue of its stalk domain. Oligomerization is critical for GTPase activity, protein stability, and recognition of viral target structures. Interacts with TRPC1, TRPC3, TRPC4, TRPC5, TRPC6 and TRPC7. Interacts with HSPA5. Interacts with TUBB/TUBB5. Interacts with DDX39A and DDX39B. Post-translationally, ISGylated.

Its subcellular location is the cytoplasm. It localises to the endoplasmic reticulum membrane. The protein resides in the perinuclear region. In terms of biological role, interferon-induced dynamin-like GTPase with antiviral activity. The chain is Interferon-induced GTP-binding protein Mx1 (MX1) from Canis lupus familiaris (Dog).